The following is a 603-amino-acid chain: Polypeptide N-acetylgalactosaminyltransferase 9 (603 aa).

Topologically, residues 1 to 6 (MAVARK) are cytoplasmic. A helical; Signal-anchor for type II membrane protein transmembrane segment spans residues 7 to 29 (IRTLLTVNILVFVGIVLFSVYCR). The Lumenal portion of the chain corresponds to 30–603 (LQGRSQELVR…IRNWIKHARH (574 aa)). Intrachain disulfides connect Cys-141–Cys-372 and Cys-363–Cys-442. The catalytic subdomain A stretch occupies residues 150–261 (LPQVSVVFIF…TGWAEPALSR (112 aa)). Substrate contacts are provided by Asp-191 and Arg-222. Asp-245, His-247, and His-377 together coordinate Mn(2+). Residues 318–380 (PIRTPAMIGC…PCSRVAHIER (63 aa)) are catalytic subdomain B. Residues Arg-380 and Tyr-385 each coordinate substrate. Residue Asn-460 is glycosylated (N-linked (GlcNAc...) asparagine). Positions 464–600 (TYGEVRNSKA…KWMIRNWIKH (137 aa)) constitute a Ricin B-type lectin domain. 3 disulfides stabilise this stretch: Cys-477/Cys-493, Cys-525/Cys-540, and Cys-567/Cys-587.

It belongs to the glycosyltransferase 2 family. GalNAc-T subfamily. Requires Mn(2+) as cofactor. In terms of tissue distribution, specifically expressed in brain. Not expressed in heart, placenta, lung, liver, skeletal muscle, kidney, pancreas, spleen, thymus, prostate, testis, ovary, small intestine, colon and leukocyte. In brain, it is expressed in cerebellum, frontal lobe, temporal lobe, putamen and spinal cord, weakly expressed in cerebral cortex. Not expressed in medulla and occipital pole.

It localises to the golgi apparatus membrane. The catalysed reaction is L-seryl-[protein] + UDP-N-acetyl-alpha-D-galactosamine = a 3-O-[N-acetyl-alpha-D-galactosaminyl]-L-seryl-[protein] + UDP + H(+). It carries out the reaction L-threonyl-[protein] + UDP-N-acetyl-alpha-D-galactosamine = a 3-O-[N-acetyl-alpha-D-galactosaminyl]-L-threonyl-[protein] + UDP + H(+). Its pathway is protein modification; protein glycosylation. Catalyzes the initial reaction in O-linked oligosaccharide biosynthesis, the transfer of an N-acetyl-D-galactosamine residue to a serine or threonine residue on the protein receptor. Does not glycosylate apomucin or SDC3. This chain is Polypeptide N-acetylgalactosaminyltransferase 9 (GALNT9), found in Homo sapiens (Human).